The chain runs to 1224 residues: Protein MSN5 (1224 aa).

Residues 1200–1224 (NKENGDMLDDPNIEDGAVGNLFDDN) are disordered.

In terms of assembly, interacts with CEX1.

This chain is Protein MSN5 (MSN5), found in Saccharomyces cerevisiae (strain ATCC 204508 / S288c) (Baker's yeast).